Reading from the N-terminus, the 214-residue chain is NADH-quinone oxidoreductase subunit C (214 aa).

This sequence belongs to the complex I 30 kDa subunit family. In terms of assembly, NDH-1 is composed of 14 different subunits. Subunits NuoB, C, D, E, F, and G constitute the peripheral sector of the complex.

It localises to the cell inner membrane. The catalysed reaction is a quinone + NADH + 5 H(+)(in) = a quinol + NAD(+) + 4 H(+)(out). In terms of biological role, NDH-1 shuttles electrons from NADH, via FMN and iron-sulfur (Fe-S) centers, to quinones in the respiratory chain. The immediate electron acceptor for the enzyme in this species is believed to be ubiquinone. Couples the redox reaction to proton translocation (for every two electrons transferred, four hydrogen ions are translocated across the cytoplasmic membrane), and thus conserves the redox energy in a proton gradient. The chain is NADH-quinone oxidoreductase subunit C from Francisella tularensis subsp. tularensis (strain WY96-3418).